The following is a 145-amino-acid chain: Arginine repressor (145 aa).

The protein belongs to the ArgR family.

It localises to the cytoplasm. It functions in the pathway amino-acid biosynthesis; L-arginine biosynthesis [regulation]. Functionally, regulates arginine biosynthesis genes. The protein is Arginine repressor of Streptococcus pyogenes serotype M6 (strain ATCC BAA-946 / MGAS10394).